A 583-amino-acid polypeptide reads, in one-letter code: Isocitrate dehydrogenase kinase/phosphatase (583 aa).

ATP contacts are provided by residues 315–321 (APGIRGM) and K336. The active site involves D371.

Belongs to the AceK family.

It localises to the cytoplasm. The enzyme catalyses L-seryl-[isocitrate dehydrogenase] + ATP = O-phospho-L-seryl-[isocitrate dehydrogenase] + ADP + H(+). Its function is as follows. Bifunctional enzyme which can phosphorylate or dephosphorylate isocitrate dehydrogenase (IDH) on a specific serine residue. This is a regulatory mechanism which enables bacteria to bypass the Krebs cycle via the glyoxylate shunt in response to the source of carbon. When bacteria are grown on glucose, IDH is fully active and unphosphorylated, but when grown on acetate or ethanol, the activity of IDH declines drastically concomitant with its phosphorylation. This chain is Isocitrate dehydrogenase kinase/phosphatase, found in Salmonella enteritidis PT4 (strain P125109).